The chain runs to 255 residues: 5-oxoprolinase subunit A (255 aa).

It belongs to the LamB/PxpA family. In terms of assembly, forms a complex composed of PxpA, PxpB and PxpC.

It catalyses the reaction 5-oxo-L-proline + ATP + 2 H2O = L-glutamate + ADP + phosphate + H(+). Catalyzes the cleavage of 5-oxoproline to form L-glutamate coupled to the hydrolysis of ATP to ADP and inorganic phosphate. The protein is 5-oxoprolinase subunit A of Nitrobacter winogradskyi (strain ATCC 25391 / DSM 10237 / CIP 104748 / NCIMB 11846 / Nb-255).